Here is a 208-residue protein sequence, read N- to C-terminus: ATP-dependent Clp protease proteolytic subunit 1 (208 aa).

The Nucleophile role is filled by serine 108. Residue histidine 133 is part of the active site.

Belongs to the peptidase S14 family. Fourteen ClpP subunits assemble into 2 heptameric rings which stack back to back to give a disk-like structure with a central cavity, resembling the structure of eukaryotic proteasomes.

The protein localises to the cytoplasm. The enzyme catalyses Hydrolysis of proteins to small peptides in the presence of ATP and magnesium. alpha-casein is the usual test substrate. In the absence of ATP, only oligopeptides shorter than five residues are hydrolyzed (such as succinyl-Leu-Tyr-|-NHMec, and Leu-Tyr-Leu-|-Tyr-Trp, in which cleavage of the -Tyr-|-Leu- and -Tyr-|-Trp bonds also occurs).. Its function is as follows. Cleaves peptides in various proteins in a process that requires ATP hydrolysis. Has a chymotrypsin-like activity. Plays a major role in the degradation of misfolded proteins. In Corynebacterium efficiens (strain DSM 44549 / YS-314 / AJ 12310 / JCM 11189 / NBRC 100395), this protein is ATP-dependent Clp protease proteolytic subunit 1.